A 148-amino-acid polypeptide reads, in one-letter code: Small ribosomal subunit protein uS12 (148 aa).

The protein belongs to the universal ribosomal protein uS12 family. As to quaternary structure, part of the 30S ribosomal subunit.

In terms of biological role, with S4 and S5 plays an important role in translational accuracy. Located at the interface of the 30S and 50S subunits. The sequence is that of Small ribosomal subunit protein uS12 from Methanocaldococcus jannaschii (strain ATCC 43067 / DSM 2661 / JAL-1 / JCM 10045 / NBRC 100440) (Methanococcus jannaschii).